The following is a 129-amino-acid chain: Small ribosomal subunit protein uS8c (129 aa).

The protein belongs to the universal ribosomal protein uS8 family. As to quaternary structure, part of the 30S ribosomal subunit.

The protein resides in the plastid. It localises to the chloroplast. Functionally, one of the primary rRNA binding proteins, it binds directly to 16S rRNA central domain where it helps coordinate assembly of the platform of the 30S subunit. This Nephroselmis olivacea (Green alga) protein is Small ribosomal subunit protein uS8c (rps8).